The chain runs to 935 residues: Protein HIRA (935 aa).

WD repeat units lie at residues 14–58 (HDTG…DKKK), 72–111 (ESQSQSNSCRWSPDGKRFAFGSDDSSVSVWEYVGLINSMG), 131–170 (GHSMEVLTVEWSPNGKYLASGSIDYRIIIYNARKLPDRIT), 174–213 (DIQLPVKGLSWDPIGKYLASLEGDKKLRFWATDSWQCVKS), 222–261 (IEETMLTRLDWSPDGKYLMTPAAVRSGKPLIKLIQRQTWK), 277–320 (RAMP…KPLF), and 325–362 (IFNHTVMDFAWCGRNLLACSQDGTVKVIHLSESVIGEM). Residues 431-556 (SSDIQLTKSM…RNKKRKVPAT (126 aa)) form a disordered region. Over residues 439-468 (SMEDNSKENESKNSEKTMMEERNKQIDVRK) the composition is skewed to basic and acidic residues. Residues 480–492 (GTTTADPMTSLSS) show a composition bias toward polar residues. Over residues 520–542 (DLEDSSDSDDDDEEEEEDMEISD) the composition is skewed to acidic residues.

This sequence belongs to the WD repeat HIR1 family.

The protein resides in the nucleus. In terms of biological role, required for replication-independent chromatin assembly and for the periodic repression of histone gene transcription during the cell cycle. This is Protein HIRA from Caenorhabditis elegans.